The primary structure comprises 127 residues: Riboflavin kinase (127 aa).

A CDP-binding site is contributed by 10-15 (GLGEGR). Thr39 and Asn41 together coordinate Mg(2+). FMN contacts are provided by Thr96 and Glu104. 109 to 112 (VHLR) is a CDP binding site.

The protein belongs to the archaeal riboflavin kinase family. The cofactor is Mg(2+).

It catalyses the reaction riboflavin + CTP = CDP + FMN + H(+). Its pathway is cofactor biosynthesis; FMN biosynthesis; FMN from riboflavin (CTP route): step 1/1. Catalyzes the CTP-dependent phosphorylation of riboflavin (vitamin B2) to form flavin mononucleotide (FMN). This Methanococcus maripaludis (strain C7 / ATCC BAA-1331) protein is Riboflavin kinase.